The chain runs to 349 residues: N-formyl peptide receptor 3 (349 aa).

Over 1–27 the chain is Extracellular; it reads METNFSIPLNETEEVLPEPAGHTVLWI. N4 and N10 each carry an N-linked (GlcNAc...) asparagine glycan. The chain crosses the membrane as a helical span at residues 28 to 50; sequence FSLLVHGVTFIFGVLGNGLVIWV. Over 51-61 the chain is Cytoplasmic; it reads AGFLMTRTVNT. Residues 62-83 form a helical membrane-spanning segment; that stretch reads ICYLNLALADFSFSAILPFHMV. Residues 84 to 100 are Extracellular-facing; the sequence is SVAMREKWPFGSFLCKL. A disulfide bridge links C98 with C176. A helical transmembrane segment spans residues 101-121; that stretch reads VHVMIDINLFVSVYLITIIAL. At 122-140 the chain is on the cytoplasmic side; sequence DRCICVLHPAWAQNHRTMS. The helical transmembrane segment at 141-162 threads the bilayer; the sequence is LAKRVMTGLWILTIVLTLPNFI. The Extracellular portion of the chain corresponds to 163-205; the sequence is FWTTISTTNGDTYCIFNFPFWGDTAVERLNVFITMAKVFLILH. The helical transmembrane segment at 206–226 threads the bilayer; it reads FIIGFSMPMSIITVCYGIIAA. Residues 227 to 242 lie on the Cytoplasmic side of the membrane; it reads KIHRNHMIKSSRPLRV. The helical transmembrane segment at 243–266 threads the bilayer; it reads FAAVVASFFICWFPYELIGILMAV. Residues 267 to 286 lie on the Extracellular side of the membrane; the sequence is WLKEMLLNGKYKIILVLINP. A helical membrane pass occupies residues 287–306; that stretch reads TSSLAFFNSCLNPILYVFLG. Topologically, residues 307–349 are cytoplasmic; that stretch reads SNFQERLIRSLPTSLERALTEVPDSAQTSNTHTTSASPPEETE. The disordered stretch occupies residues 327 to 349; sequence EVPDSAQTSNTHTTSASPPEETE. The segment covering 331–343 has biased composition (polar residues); that stretch reads SAQTSNTHTTSAS.

Belongs to the G-protein coupled receptor 1 family.

It localises to the cell membrane. Its function is as follows. Low affinity receptor for N-formyl-methionyl peptides, which are powerful neutrophils chemotactic factors. Binding of FMLP to the receptor causes activation of neutrophils. This response is mediated via a G-protein that activates a phosphatidylinositol-calcium second messenger system. This Gorilla gorilla gorilla (Western lowland gorilla) protein is N-formyl peptide receptor 3 (FPR3).